A 170-amino-acid polypeptide reads, in one-letter code: Adenine phosphoribosyltransferase (170 aa).

It belongs to the purine/pyrimidine phosphoribosyltransferase family. As to quaternary structure, homodimer.

Its subcellular location is the cytoplasm. It carries out the reaction AMP + diphosphate = 5-phospho-alpha-D-ribose 1-diphosphate + adenine. It participates in purine metabolism; AMP biosynthesis via salvage pathway; AMP from adenine: step 1/1. Functionally, catalyzes a salvage reaction resulting in the formation of AMP, that is energically less costly than de novo synthesis. The sequence is that of Adenine phosphoribosyltransferase from Streptococcus pneumoniae (strain Taiwan19F-14).